The chain runs to 379 residues: Glutamate 5-kinase (379 aa).

Position 19 (Lys-19) interacts with ATP. Substrate is bound by residues Ser-59, Asp-146, and Asn-158. ATP-binding positions include Thr-178 to Asp-179 and Thr-220 to Lys-226. One can recognise a PUA domain in the interval Ser-285–Asp-363.

Belongs to the glutamate 5-kinase family.

Its subcellular location is the cytoplasm. The enzyme catalyses L-glutamate + ATP = L-glutamyl 5-phosphate + ADP. The protein operates within amino-acid biosynthesis; L-proline biosynthesis; L-glutamate 5-semialdehyde from L-glutamate: step 1/2. Its function is as follows. Catalyzes the transfer of a phosphate group to glutamate to form L-glutamate 5-phosphate. The polypeptide is Glutamate 5-kinase (Vibrio campbellii (strain ATCC BAA-1116)).